The chain runs to 238 residues: Demethylmenaquinone methyltransferase (238 aa).

S-adenosyl-L-methionine-binding positions include Thr65, Asp85, and 109–110 (DA).

This sequence belongs to the class I-like SAM-binding methyltransferase superfamily. MenG/UbiE family.

It catalyses the reaction a 2-demethylmenaquinol + S-adenosyl-L-methionine = a menaquinol + S-adenosyl-L-homocysteine + H(+). Its pathway is quinol/quinone metabolism; menaquinone biosynthesis; menaquinol from 1,4-dihydroxy-2-naphthoate: step 2/2. In terms of biological role, methyltransferase required for the conversion of demethylmenaquinol (DMKH2) to menaquinol (MKH2). The polypeptide is Demethylmenaquinone methyltransferase (Roseiflexus castenholzii (strain DSM 13941 / HLO8)).